Consider the following 102-residue polypeptide: Carboxysome shell protein CcmK2 (102 aa).

Residues 4-90 enclose the BMC domain; sequence AVGMIETRGF…PHENLEYVLP (87 aa).

This sequence belongs to the bacterial microcompartments protein family. CcmK subfamily. In terms of assembly, homohexamer. Stacked hexamers, with the concave faces together, have also been crystallized. Interacts preferentially with itself, then with CcmK1 and CcmK4a in vitro. May interact with CcmL, this occurs at very high CcmK2 concentrations. Interacts with CcmN and CcmO in the carboxysome.

The protein localises to the carboxysome. Probably the major shell protein of the carboxysome, a polyhedral inclusion where RuBisCO (ribulose bisphosphate carboxylase, rbcL-rbcS) is sequestered. Assembles into hexamers which make sheets that form the facets of the polyhedral carboxysome. The hexamer central pore probably regulates metabolite flux. This Thermosynechococcus vestitus (strain NIES-2133 / IAM M-273 / BP-1) protein is Carboxysome shell protein CcmK2.